A 317-amino-acid chain; its full sequence is Small ribosomal subunit protein RACK1 (317 aa).

WD repeat units follow at residues 15–55 (GHNG…DNQY), 64–103 (GHSH…TTQR), 106–146 (GHKG…ATLT), 148–188 (HNDW…VNAD), 191–230 (GHTG…TLYT), 232–272 (EAKA…DELK), and 281–317 (AKDP…TPSA).

The protein belongs to the WD repeat G protein beta family. Ribosomal protein RACK1 subfamily. As to quaternary structure, component of the small ribosomal subunit. Mature ribosomes consist of a small (40S) and a large (60S) subunit. The 40S subunit contains about 32 different proteins and 1 molecule of RNA (18S). The 60S subunit contains 45 different proteins and 3 molecules of RNA (25S, 5.8S and 5S).

The protein resides in the cytoplasm. Functionally, component of the ribosome, a large ribonucleoprotein complex responsible for the synthesis of proteins in the cell. The small ribosomal subunit (SSU) binds messenger RNAs (mRNAs) and translates the encoded message by selecting cognate aminoacyl-transfer RNA (tRNA) molecules. The large subunit (LSU) contains the ribosomal catalytic site termed the peptidyl transferase center (PTC), which catalyzes the formation of peptide bonds, thereby polymerizing the amino acids delivered by tRNAs into a polypeptide chain. The nascent polypeptides leave the ribosome through a tunnel in the LSU and interact with protein factors that function in enzymatic processing, targeting, and the membrane insertion of nascent chains at the exit of the ribosomal tunnel. Located at the head of the 40S ribosomal subunit in the vicinity of the mRNA exit channel, it serves as a scaffold protein that can recruit other proteins to the ribosome. Involved in the negative regulation of translation of a specific subset of proteins. Plays a role in morphogenesis and pathogenesis. This Candida albicans (strain SC5314 / ATCC MYA-2876) (Yeast) protein is Small ribosomal subunit protein RACK1.